Reading from the N-terminus, the 357-residue chain is Phenylalanine--tRNA ligase alpha subunit (357 aa).

A Mg(2+)-binding site is contributed by Glu258.

It belongs to the class-II aminoacyl-tRNA synthetase family. Phe-tRNA synthetase alpha subunit type 1 subfamily. As to quaternary structure, tetramer of two alpha and two beta subunits. It depends on Mg(2+) as a cofactor.

It localises to the cytoplasm. It catalyses the reaction tRNA(Phe) + L-phenylalanine + ATP = L-phenylalanyl-tRNA(Phe) + AMP + diphosphate + H(+). The chain is Phenylalanine--tRNA ligase alpha subunit from Caulobacter vibrioides (strain ATCC 19089 / CIP 103742 / CB 15) (Caulobacter crescentus).